The chain runs to 146 residues: General odorant-binding protein 19a (146 aa).

Positions 1-22 (MKFHLLLVCVAISLGPIPQSEA) are cleaved as a signal peptide. Disulfide bonds link Cys40/Cys72, Cys68/Cys126, and Cys113/Cys135.

Belongs to the PBP/GOBP family. As to expression, expressed in adult olfactory system. Expressed exclusively in a subset of chemosensory sensilla on the third antennal segment.

The protein resides in the secreted. In terms of biological role, present in the aqueous fluid surrounding olfactory sensory dendrites and are thought to aid in the capture and transport of hydrophobic odorants into and through this fluid. This chain is General odorant-binding protein 19a (Obp19a), found in Drosophila melanogaster (Fruit fly).